Here is a 246-residue protein sequence, read N- to C-terminus: ATP synthase subunit a, chloroplastic (246 aa).

5 helical membrane-spanning segments follow: residues 35–55, 94–114, 132–152, 198–218, and 219–239; these read GQVL…GLIA, VPFI…GALL, DINT…YAGI, LVVG…VMLL, and GVFT…AYIG.

The protein belongs to the ATPase A chain family. As to quaternary structure, F-type ATPases have 2 components, CF(1) - the catalytic core - and CF(0) - the membrane proton channel. CF(1) has five subunits: alpha(3), beta(3), gamma(1), delta(1), epsilon(1). CF(0) has four main subunits: a, b, b' and c.

The protein resides in the plastid. It localises to the chloroplast thylakoid membrane. Its function is as follows. Key component of the proton channel; it plays a direct role in the translocation of protons across the membrane. The protein is ATP synthase subunit a, chloroplastic of Stigeoclonium helveticum (Green alga).